The sequence spans 286 residues: Probable 4-deoxy-4-formamido-L-arabinose-phosphoundecaprenol deformylase ArnD (286 aa).

One can recognise a NodB homology domain in the interval 1–248; it reads MGTKLGVPNL…IAINEGINFC (248 aa).

It belongs to the polysaccharide deacetylase family. ArnD deformylase subfamily.

It catalyses the reaction 4-deoxy-4-formamido-alpha-L-arabinopyranosyl di-trans,octa-cis-undecaprenyl phosphate + H2O = 4-amino-4-deoxy-alpha-L-arabinopyranosyl di-trans,octa-cis-undecaprenyl phosphate + formate. It functions in the pathway glycolipid biosynthesis; 4-amino-4-deoxy-alpha-L-arabinose undecaprenyl phosphate biosynthesis; 4-amino-4-deoxy-alpha-L-arabinose undecaprenyl phosphate from UDP-4-deoxy-4-formamido-beta-L-arabinose and undecaprenyl phosphate: step 2/2. The protein operates within bacterial outer membrane biogenesis; lipopolysaccharide biosynthesis. Its function is as follows. Catalyzes the deformylation of 4-deoxy-4-formamido-L-arabinose-phosphoundecaprenol to 4-amino-4-deoxy-L-arabinose-phosphoundecaprenol. The modified arabinose is attached to lipid A and is required for resistance to polymyxin and cationic antimicrobial peptides. The polypeptide is Probable 4-deoxy-4-formamido-L-arabinose-phosphoundecaprenol deformylase ArnD (Wigglesworthia glossinidia brevipalpis).